Here is a 260-residue protein sequence, read N- to C-terminus: Archaerhodopsin-1 (260 aa).

A propeptide spanning residues 1-6 (MDPIAL) is cleaved from the precursor. Topologically, residues 7 to 20 (TAAVGADLLGDGRP) are extracellular. Residues 21 to 42 (ETLWLGIGTLLMLIGTFYFIVK) traverse the membrane as a helical segment. Residues 43–51 (GWGVTDKEA) are Cytoplasmic-facing. Residues 52 to 73 (REYYSITILVPGIASAAYLSMF) form a helical membrane-spanning segment. The Extracellular segment spans residues 74–91 (FGIGLTEVQVGSEMLDIY). Residues 92 to 113 (YARYADWLFTTPLLLLDLALLA) traverse the membrane as a helical segment. At 114-116 (KVD) the chain is on the cytoplasmic side. Residues 117-139 (RVSIGTLVGVDALMIVTGLVGAL) form a helical membrane-spanning segment. Residues 140-143 (SHTP) lie on the Extracellular side of the membrane. A helical membrane pass occupies residues 144 to 172 (LARYTWWLFSTICMIVVLYFLATSLRAAA). At 173–176 (KERG) the chain is on the cytoplasmic side. A helical transmembrane segment spans residues 177–204 (PEVASTFNTLTALVLVLWTAYPILWIIG). Residues 205-212 (TEGAGVVG) are Extracellular-facing. The chain crosses the membrane as a helical span at residues 213–245 (LGIETLLFMVLDVTAKVGFGFILLRSRAILGDT). At Lys228 the chain carries N6-(retinylidene)lysine. Residues 246–260 (EAPEPSAGAEASAAD) lie on the Cytoplasmic side of the membrane.

This sequence belongs to the archaeal/bacterial/fungal opsin family.

It localises to the cell membrane. Its function is as follows. Light-driven proton pump. It may interact with bacterioruberin in the claret membrane. This Halorubrum ezzemoulense (Halorubrum chaoviator) protein is Archaerhodopsin-1.